Consider the following 1372-residue polypeptide: DNA-directed RNA polymerase subunit beta' (1372 aa).

Zn(2+) contacts are provided by Cys-69, Cys-71, Cys-84, and Cys-87. Positions 460, 462, and 464 each coordinate Mg(2+). Cys-808, Cys-882, Cys-889, and Cys-892 together coordinate Zn(2+).

The protein belongs to the RNA polymerase beta' chain family. As to quaternary structure, the RNAP catalytic core consists of 2 alpha, 1 beta, 1 beta' and 1 omega subunit. When a sigma factor is associated with the core the holoenzyme is formed, which can initiate transcription. Mg(2+) serves as cofactor. Requires Zn(2+) as cofactor.

It catalyses the reaction RNA(n) + a ribonucleoside 5'-triphosphate = RNA(n+1) + diphosphate. In terms of biological role, DNA-dependent RNA polymerase catalyzes the transcription of DNA into RNA using the four ribonucleoside triphosphates as substrates. The sequence is that of DNA-directed RNA polymerase subunit beta' from Rickettsia prowazekii (strain Madrid E).